A 293-amino-acid polypeptide reads, in one-letter code: Aspartate carbamoyltransferase catalytic subunit (293 aa).

Residues R50 and T51 each coordinate carbamoyl phosphate. L-aspartate is bound at residue K78. Residues R100, H127, and Q130 each coordinate carbamoyl phosphate. L-aspartate contacts are provided by R160 and R210. Positions 253 and 254 each coordinate carbamoyl phosphate.

It belongs to the aspartate/ornithine carbamoyltransferase superfamily. ATCase family. In terms of assembly, heterododecamer (2C3:3R2) of six catalytic PyrB chains organized as two trimers (C3), and six regulatory PyrI chains organized as three dimers (R2).

It catalyses the reaction carbamoyl phosphate + L-aspartate = N-carbamoyl-L-aspartate + phosphate + H(+). It functions in the pathway pyrimidine metabolism; UMP biosynthesis via de novo pathway; (S)-dihydroorotate from bicarbonate: step 2/3. In terms of biological role, catalyzes the condensation of carbamoyl phosphate and aspartate to form carbamoyl aspartate and inorganic phosphate, the committed step in the de novo pyrimidine nucleotide biosynthesis pathway. The protein is Aspartate carbamoyltransferase catalytic subunit of Staphylococcus aureus (strain USA300).